Here is a 660-residue protein sequence, read N- to C-terminus: Protein SCARECROW 2 (660 aa).

Disordered regions lie at residues 1–33 (MGSS…ITSL) and 190–286 (SDPA…KQRD). The span at 192–229 (PAPPPPPPSHPALLPPDATAPPPPPTSVAALPPPPPAQ) shows a compositional bias: pro residues. Residues 259 to 272 (AAAAAAAAAAAAAA) are compositionally biased toward low complexity. Positions 262–289 (AAAAAAAAAAAAKERKEEQRRKQRDEEG) form a coiled coil. Over residues 273 to 286 (AKERKEEQRRKQRD) the composition is skewed to basic and acidic residues. A GRAS domain is found at 283 to 653 (KQRDEEGLHL…LCLLTASAWR (371 aa)). The leucine repeat I (LRI) stretch occupies residues 290–354 (LHLLTLLLQC…VSSCLGLYAP (65 aa)). A LxCxE motif motif is present at residues 297 to 301 (LQCAE). The tract at residues 373 to 438 (FQVFNGISPF…GGPPRVRLTG (66 aa)) is VHIID. The short motif at 404 to 408 (VHIID) is the VHIID element. The segment at 448-480 (ATGKRLSDFADTLGLPFEFCPVADKAGNLDPEK) is leucine repeat II (LRII). Residues 489 to 576 (VAVHWLRHSL…QQLLSREIRN (88 aa)) form a PFYRE region. An SAW region spans residues 579–653 (AVGGPARTGD…LCLLTASAWR (75 aa)).

Belongs to the GRAS family.

The protein localises to the cytoplasm. Its function is as follows. Probable transcription factor involved in asmmetric cell division in the cortex/endodermis progenitor cell and in the process of stomata and ligule formation in leaves. The chain is Protein SCARECROW 2 (SCR2) from Oryza sativa subsp. indica (Rice).